Reading from the N-terminus, the 194-residue chain is NADH-quinone oxidoreductase subunit B (194 aa).

Residues 1–11 (MGMSQNNSTLV) are compositionally biased toward polar residues. The segment at 1–22 (MGMSQNNSTLVAPQPKGIIDPA) is disordered. Positions 72, 73, 138, and 168 each coordinate [4Fe-4S] cluster.

The protein belongs to the complex I 20 kDa subunit family. NDH-1 is composed of 14 different subunits. Subunits NuoB, C, D, E, F, and G constitute the peripheral sector of the complex. The cofactor is [4Fe-4S] cluster.

The protein resides in the cell inner membrane. It carries out the reaction a quinone + NADH + 5 H(+)(in) = a quinol + NAD(+) + 4 H(+)(out). NDH-1 shuttles electrons from NADH, via FMN and iron-sulfur (Fe-S) centers, to quinones in the respiratory chain. The immediate electron acceptor for the enzyme in this species is believed to be ubiquinone. Couples the redox reaction to proton translocation (for every two electrons transferred, four hydrogen ions are translocated across the cytoplasmic membrane), and thus conserves the redox energy in a proton gradient. This Agrobacterium fabrum (strain C58 / ATCC 33970) (Agrobacterium tumefaciens (strain C58)) protein is NADH-quinone oxidoreductase subunit B.